The sequence spans 242 residues: GATA zinc finger domain-containing protein 1 (242 aa).

The segment at 9–33 (CAVCKTQSSSMWKKGNQGEILCNGC) adopts a GATA-type zinc-finger fold. A disordered region spans residues 44-85 (GASASSTIQQNNGGGKQSKQEIHRRSARLRSTKYKAPASEKK). Low complexity predominate over residues 45–54 (ASASSTIQQN).

The protein localises to the nucleus. Its function is as follows. Component of some chromatin complex recruited to chromatin sites methylated 'Lys-4' of histone H3 (H3K4me), with a preference for trimethylated form (H3K4me3). The sequence is that of GATA zinc finger domain-containing protein 1 (gatad1) from Danio rerio (Zebrafish).